The chain runs to 374 residues: N-acetyldiaminopimelate deacetylase (374 aa).

The active site involves Asp69. Glu128 acts as the Proton acceptor in catalysis.

Belongs to the peptidase M20A family. N-acetyldiaminopimelate deacetylase subfamily.

The enzyme catalyses N-acetyl-(2S,6S)-2,6-diaminopimelate + H2O = (2S,6S)-2,6-diaminopimelate + acetate. The protein operates within amino-acid biosynthesis; L-lysine biosynthesis via DAP pathway; LL-2,6-diaminopimelate from (S)-tetrahydrodipicolinate (acetylase route): step 3/3. Functionally, catalyzes the conversion of N-acetyl-diaminopimelate to diaminopimelate and acetate. This is N-acetyldiaminopimelate deacetylase from Bacillus licheniformis (strain ATCC 14580 / DSM 13 / JCM 2505 / CCUG 7422 / NBRC 12200 / NCIMB 9375 / NCTC 10341 / NRRL NRS-1264 / Gibson 46).